A 252-amino-acid chain; its full sequence is Small ribosomal subunit protein uS3 (252 aa).

Residues 38–106 (IRKYIHARLS…EVQINIFEIK (69 aa)) enclose the KH type-2 domain. Residues 214 to 252 (PLAGMDKKQSGTGGGKGGDAPRGKSNFNKGGKPDARKRK) form a disordered region. Gly residues predominate over residues 224-233 (GTGGGKGGDA).

This sequence belongs to the universal ribosomal protein uS3 family. As to quaternary structure, part of the 30S ribosomal subunit. Forms a tight complex with proteins S10 and S14.

Its function is as follows. Binds the lower part of the 30S subunit head. Binds mRNA in the 70S ribosome, positioning it for translation. The protein is Small ribosomal subunit protein uS3 of Flavobacterium johnsoniae (strain ATCC 17061 / DSM 2064 / JCM 8514 / BCRC 14874 / CCUG 350202 / NBRC 14942 / NCIMB 11054 / UW101) (Cytophaga johnsonae).